Reading from the N-terminus, the 566-residue chain is Glucose starvation modulator protein 1 (566 aa).

The segment at residues 20 to 48 (CVFCHQKHLQCSNERPCKNCVKRNIAHGC) is a DNA-binding region (zn(2)-C6 fungal-type). 2 disordered regions span residues 65–93 (PGAVSNKQSTPRKKLKTGPVSTSVSPMDS) and 250–270 (KQASPSPSNTSTSENNTNTLS). Residues 83 to 93 (PVSTSVSPMDS) show a composition bias toward polar residues. Residues 253 to 270 (SPSPSNTSTSENNTNTLS) show a composition bias toward low complexity.

Belongs to the ERT1/acuK family.

The protein resides in the nucleus. Functionally, transcription factor which regulates nonfermentable carbon utilization. In Candida albicans (strain SC5314 / ATCC MYA-2876) (Yeast), this protein is Glucose starvation modulator protein 1 (ZCF23).